The chain runs to 661 residues: UvrABC system protein B (661 aa).

The 158-residue stretch at 25-182 (KGLNNKKRSQ…NDLVNLQYER (158 aa)) folds into the Helicase ATP-binding domain. 38-45 (GITGSGKT) contacts ATP. Positions 91–114 (YYDYYQPEAYIPKTDVFIEKDSSI) match the Beta-hairpin motif. The Helicase C-terminal domain occupies 430 to 592 (QVEDLVGEIQ…IIPKTINRTI (163 aa)). Positions 621–656 (KAHIDKLRKEMLKAASNLEFEQAAKLRDQLKTLEEA) constitute a UVR domain.

It belongs to the UvrB family. In terms of assembly, forms a heterotetramer with UvrA during the search for lesions. Interacts with UvrC in an incision complex.

Its subcellular location is the cytoplasm. Functionally, the UvrABC repair system catalyzes the recognition and processing of DNA lesions. A damage recognition complex composed of 2 UvrA and 2 UvrB subunits scans DNA for abnormalities. Upon binding of the UvrA(2)B(2) complex to a putative damaged site, the DNA wraps around one UvrB monomer. DNA wrap is dependent on ATP binding by UvrB and probably causes local melting of the DNA helix, facilitating insertion of UvrB beta-hairpin between the DNA strands. Then UvrB probes one DNA strand for the presence of a lesion. If a lesion is found the UvrA subunits dissociate and the UvrB-DNA preincision complex is formed. This complex is subsequently bound by UvrC and the second UvrB is released. If no lesion is found, the DNA wraps around the other UvrB subunit that will check the other stand for damage. This is UvrABC system protein B from Rickettsia bellii (strain OSU 85-389).